The primary structure comprises 499 residues: Alpha-amylase A type-1/2 (499 aa).

An N-terminal signal peptide occupies residues Met-1 to Ala-21. The cysteines at positions 51 and 59 are disulfide-linked. 2 residues coordinate substrate: Gln-56 and Trp-104. Asn-142 is a Ca(2+) binding site. A substrate-binding site is contributed by His-143. A disulfide bond links Cys-171 and Cys-185. Ca(2+) contacts are provided by Glu-183 and Asp-196. The N-linked (GlcNAc...) asparagine glycan is linked to Asn-218. Arg-225 is a substrate binding site. 3 residues coordinate Ca(2+): Asp-227, His-231, and Glu-251. The active-site Nucleophile is the Asp-227. Lys-230 to His-231 is a substrate binding site. Catalysis depends on Glu-251, which acts as the Proton donor. Position 255 (Gly-255) interacts with substrate. Cys-261 and Cys-304 are oxidised to a cystine. Residues Asp-318 and Arg-365 each contribute to the substrate site. The cysteines at positions 461 and 496 are disulfide-linked.

Belongs to the glycosyl hydrolase 13 family. As to quaternary structure, monomer. Ca(2+) is required as a cofactor.

Its subcellular location is the secreted. It carries out the reaction Endohydrolysis of (1-&gt;4)-alpha-D-glucosidic linkages in polysaccharides containing three or more (1-&gt;4)-alpha-linked D-glucose units.. This Aspergillus oryzae (strain ATCC 42149 / RIB 40) (Yellow koji mold) protein is Alpha-amylase A type-1/2 (amy1).